The following is a 98-amino-acid chain: Alpha-elicitin MGM-alpha (98 aa).

Disulfide bonds link Cys-3-Cys-71, Cys-27-Cys-56, and Cys-51-Cys-95.

This sequence belongs to the elicitin family.

It is found in the secreted. In terms of biological role, induces local and distal defense responses (incompatible hypersensitive reaction) in plants from the solanaceae and cruciferae families. Elicits leaf necrosis and causes the accumulation of pathogenesis-related proteins. Might interact with the lipidic molecules of the plasma membrane. The polypeptide is Alpha-elicitin MGM-alpha (Phytophthora megasperma (Potato pink rot fungus)).